Reading from the N-terminus, the 357-residue chain is tRNA N6-adenosine threonylcarbamoyltransferase (357 aa).

Residues His113 and His117 each coordinate Fe cation. Substrate is bound by residues 136–140, Asp169, Gly182, and Asn288; that span reads LVSGG. Position 316 (Asp316) interacts with Fe cation.

This sequence belongs to the KAE1 / TsaD family. Fe(2+) is required as a cofactor.

The protein resides in the cytoplasm. It carries out the reaction L-threonylcarbamoyladenylate + adenosine(37) in tRNA = N(6)-L-threonylcarbamoyladenosine(37) in tRNA + AMP + H(+). Its function is as follows. Required for the formation of a threonylcarbamoyl group on adenosine at position 37 (t(6)A37) in tRNAs that read codons beginning with adenine. Is involved in the transfer of the threonylcarbamoyl moiety of threonylcarbamoyl-AMP (TC-AMP) to the N6 group of A37, together with TsaE and TsaB. TsaD likely plays a direct catalytic role in this reaction. In Gemmatimonas aurantiaca (strain DSM 14586 / JCM 11422 / NBRC 100505 / T-27), this protein is tRNA N6-adenosine threonylcarbamoyltransferase.